Consider the following 214-residue polypeptide: Urease accessory protein UreE (214 aa).

Residues 163–214 (NAEPSGVDHSHEATDSGHGYGEDHDHDHSHDHNHDHDHNHDHDHSHSHDSHE) form a disordered region. Basic and acidic residues predominate over residues 168–214 (GVDHSHEATDSGHGYGEDHDHDHSHDHNHDHDHNHDHDHSHSHDSHE).

This sequence belongs to the UreE family.

Its subcellular location is the cytoplasm. Involved in urease metallocenter assembly. Binds nickel. Probably functions as a nickel donor during metallocenter assembly. In Natronomonas pharaonis (strain ATCC 35678 / DSM 2160 / CIP 103997 / JCM 8858 / NBRC 14720 / NCIMB 2260 / Gabara) (Halobacterium pharaonis), this protein is Urease accessory protein UreE.